Reading from the N-terminus, the 307-residue chain is Elongation factor Ts (307 aa).

An involved in Mg(2+) ion dislocation from EF-Tu region spans residues 80–83 (TDFV).

Belongs to the EF-Ts family.

The protein localises to the cytoplasm. In terms of biological role, associates with the EF-Tu.GDP complex and induces the exchange of GDP to GTP. It remains bound to the aminoacyl-tRNA.EF-Tu.GTP complex up to the GTP hydrolysis stage on the ribosome. This is Elongation factor Ts from Albidiferax ferrireducens (strain ATCC BAA-621 / DSM 15236 / T118) (Rhodoferax ferrireducens).